Consider the following 259-residue polypeptide: Ditrans,polycis-undecaprenyl-diphosphate synthase ((2E,6E)-farnesyl-diphosphate specific) (259 aa).

Asp32 is an active-site residue. Asp32 is a binding site for Mg(2+). Substrate-binding positions include 33 to 36 (GNGR), Trp37, Arg45, His49, and 77 to 79 (STE). Catalysis depends on Asn80, which acts as the Proton acceptor. Residues Trp81, Arg83, Arg203, and 209 to 211 (RIS) each bind substrate. Mg(2+) is bound at residue Glu222.

This sequence belongs to the UPP synthase family. In terms of assembly, homodimer. Requires Mg(2+) as cofactor.

It carries out the reaction 8 isopentenyl diphosphate + (2E,6E)-farnesyl diphosphate = di-trans,octa-cis-undecaprenyl diphosphate + 8 diphosphate. Its function is as follows. Catalyzes the sequential condensation of isopentenyl diphosphate (IPP) with (2E,6E)-farnesyl diphosphate (E,E-FPP) to yield (2Z,6Z,10Z,14Z,18Z,22Z,26Z,30Z,34E,38E)-undecaprenyl diphosphate (di-trans,octa-cis-UPP). UPP is the precursor of glycosyl carrier lipid in the biosynthesis of bacterial cell wall polysaccharide components such as peptidoglycan and lipopolysaccharide. This is Ditrans,polycis-undecaprenyl-diphosphate synthase ((2E,6E)-farnesyl-diphosphate specific) (uppS) from Lactiplantibacillus plantarum (strain ATCC BAA-793 / NCIMB 8826 / WCFS1) (Lactobacillus plantarum).